Here is a 157-residue protein sequence, read N- to C-terminus: Transcription elongation factor GreA (157 aa).

Belongs to the GreA/GreB family.

Its function is as follows. Necessary for efficient RNA polymerase transcription elongation past template-encoded arresting sites. The arresting sites in DNA have the property of trapping a certain fraction of elongating RNA polymerases that pass through, resulting in locked ternary complexes. Cleavage of the nascent transcript by cleavage factors such as GreA or GreB allows the resumption of elongation from the new 3'terminus. GreA releases sequences of 2 to 3 nucleotides. This chain is Transcription elongation factor GreA, found in Caulobacter sp. (strain K31).